The sequence spans 118 residues: Putative pterin-4-alpha-carbinolamine dehydratase (118 aa).

The protein belongs to the pterin-4-alpha-carbinolamine dehydratase family.

It catalyses the reaction (4aS,6R)-4a-hydroxy-L-erythro-5,6,7,8-tetrahydrobiopterin = (6R)-L-erythro-6,7-dihydrobiopterin + H2O. The polypeptide is Putative pterin-4-alpha-carbinolamine dehydratase (Pseudomonas fluorescens (strain SBW25)).